Here is a 146-residue protein sequence, read N- to C-terminus: 3-dehydroquinate dehydratase (146 aa).

Catalysis depends on Y23, which acts as the Proton acceptor. N74, H80, and D87 together coordinate substrate. H100 acts as the Proton donor in catalysis. Substrate is bound by residues 101-102 and R111; that span reads IS.

The protein belongs to the type-II 3-dehydroquinase family. Homododecamer.

The enzyme catalyses 3-dehydroquinate = 3-dehydroshikimate + H2O. Its pathway is metabolic intermediate biosynthesis; chorismate biosynthesis; chorismate from D-erythrose 4-phosphate and phosphoenolpyruvate: step 3/7. In terms of biological role, catalyzes a trans-dehydration via an enolate intermediate. This chain is 3-dehydroquinate dehydratase, found in Bacillus cereus (strain ATCC 14579 / DSM 31 / CCUG 7414 / JCM 2152 / NBRC 15305 / NCIMB 9373 / NCTC 2599 / NRRL B-3711).